The sequence spans 1070 residues: MLGDGNEGISTIPGFNQIQFEGFCRFIDQGLTEELYKFPKIEDTDQEIEFQLFVETYQLVEPLIKERDAVYESLTYSSELYVSAGLIWKNSRDMQEQTIFIGNIPLMNSLGTSIVNGIYRIVINQILQSPGIYYRSELDHNGISVYTGTIISDWGGRSELEIDRKARIWARVSRKQKISILVLSSAMGLNLREILENVCYPEIFLSFLNDKERKKIGSKENSILEFYQQFACVGGDPVFSESLCKELQKKFFQQRCELGRIGRRNMNRKLNLDIPQNNTFLLPRDILAAADHLIGLKFGMGALDDMNHLKNKRIRSVADLLQDQFGLALVRLENVVRGTICGAIRHKLIPTPQNLVTSPPLTTTYESFFGLHPLSQVLDRTNPLTQIVHGRKLSYLGPGGLTGRTASFRIRDIHPSHYGRICPIDTSEGINVGLIGSLSIHARIGHWGSLESPFYEISERSTGVRMLYLSPGSDEYYMVAAGNSLALNRDIQEEQVVPARYRQEFLTIAWEQVHLRSIFPFQYFSIGASLIPFIEHNDANRALMSSNMQRQAVPLSRSEKCIVGTGLERQAALDSGALAIAEREGRIVYTNTDKILLAGNGDILSIPLVIYQRSNKNTCMHQKLRVPRGKCIKKGQILADGAATVGGELALGKNVLVAYMPWEGYNSEDAVLISERLVYEDIYTSFHIRKYEIHTHVTSQGPEKVTNEIPHLEAHLLRNLDKKGIVMLGSWVETGDILVGKLTPQVVKESSYAPEDRLLRAILGIQVSTSKETCLKLPIGGRGRVIDVRWIQKRGGSSYNPETIRVYISQKREIKVGDKVAGRHGNKGIISKILPRQDMPYLQDGRSVDMVFNPLGVPSRMNVGQIFECSLGLAGSLLDRHYRIAPFDERYEQEASRKLVFSELYEASKQTANPWVFEPEYPGKSRIFDGRTGNPFEQPVIIGKPYILKLIHQVDDKIHGRSSGHYALVTQQPLRGRAKQGGQRVGEMEVWALEGFGVAHILQEMLTYKSDHIRARQEVLGTTIIGGTIPNPEDAPESFRLLVRELRSLALELNHFLVSEKNFQINRKEA.

It belongs to the RNA polymerase beta chain family. As to quaternary structure, in plastids the minimal PEP RNA polymerase catalytic core is composed of four subunits: alpha, beta, beta', and beta''. When a (nuclear-encoded) sigma factor is associated with the core the holoenzyme is formed, which can initiate transcription.

The protein resides in the plastid. It localises to the chloroplast. It catalyses the reaction RNA(n) + a ribonucleoside 5'-triphosphate = RNA(n+1) + diphosphate. DNA-dependent RNA polymerase catalyzes the transcription of DNA into RNA using the four ribonucleoside triphosphates as substrates. The sequence is that of DNA-directed RNA polymerase subunit beta from Solanum bulbocastanum (Wild potato).